Here is an 88-residue protein sequence, read N- to C-terminus: Conotoxin Ca8.3 (88 aa).

The first 21 residues, 1–21, serve as a signal peptide directing secretion; it reads MMLKMGAMFVLLLLFILPSSQ. Positions 22–46 are excised as a propeptide; it reads QEGDVQARKTHLKSGFYGTLAMSTR.

It belongs to the conotoxin S superfamily. In terms of processing, contains 5 disulfide bonds. As to expression, expressed by the venom duct.

It localises to the secreted. This chain is Conotoxin Ca8.3, found in Conus caracteristicus (Characteristic cone).